We begin with the raw amino-acid sequence, 266 residues long: Translation initiation factor 2 subunit alpha (266 aa).

One can recognise an S1 motif domain in the interval 12–83; sequence GEILIATVKQ…RKGTVDVSLK (72 aa).

The protein belongs to the eIF-2-alpha family. As to quaternary structure, heterotrimer composed of an alpha, a beta and a gamma chain.

Functionally, eIF-2 functions in the early steps of protein synthesis by forming a ternary complex with GTP and initiator tRNA. The protein is Translation initiation factor 2 subunit alpha of Saccharolobus solfataricus (strain ATCC 35092 / DSM 1617 / JCM 11322 / P2) (Sulfolobus solfataricus).